Consider the following 68-residue polypeptide: DNA-directed RNA polymerase subunit Rpo10 (68 aa).

Cysteine 7, cysteine 10, cysteine 44, and cysteine 45 together coordinate Zn(2+).

The protein belongs to the archaeal Rpo10/eukaryotic RPB10 RNA polymerase subunit family. As to quaternary structure, part of the RNA polymerase complex. It depends on Zn(2+) as a cofactor.

The protein localises to the cytoplasm. The catalysed reaction is RNA(n) + a ribonucleoside 5'-triphosphate = RNA(n+1) + diphosphate. DNA-dependent RNA polymerase (RNAP) catalyzes the transcription of DNA into RNA using the four ribonucleoside triphosphates as substrates. The polypeptide is DNA-directed RNA polymerase subunit Rpo10 (Methanococcus maripaludis (strain C6 / ATCC BAA-1332)).